Here is a 751-residue protein sequence, read N- to C-terminus: Nucleoporin NUP37 (751 aa).

Residues 21–65 form a WD 1 repeat; the sequence is SLGRRIYDVKTYPVQSPQGATILIYGHENGATVVWRGGRRLKPPK. Positions 57–77 are disordered; sequence GGRRLKPPKPQTNEKRNGTKP. Residues 68-77 are compositionally biased toward basic and acidic residues; it reads TNEKRNGTKP. WD repeat units follow at residues 162–209, 237–271, 282–322, and 351–390; these read TNDV…LTGP, AQAAPITRVVVAAHSREASGTLRLWDVPLEAKPGT, YLPS…LPSD, and TSRKPIVAAEWIARGRAILTLLADGQWGIWDLDGASPTAA. A disordered region spans residues 419–443; that stretch reads EGTSPLRNPTTQKASSSSSGEFVPM. Residues 423–438 show a composition bias toward polar residues; that stretch reads PLRNPTTQKASSSSSG. WD repeat units follow at residues 455–492 and 494–534; these read AFGGSPEKLAAVRGGITVAQLPSTLTSGAGDESAVLFL and GADP…RMIR. Residues 671–692 form a disordered region; the sequence is IPSTDAGDEETIPATSAPSSQQ. Residues 683–692 are compositionally biased toward polar residues; it reads PATSAPSSQQ. Residues 716–750 are a coiled coil; it reads RDVEQELLDIMEIDRELEQLEQARERGRKRVFFEE.

The nuclear pore complex (NPC) constitutes the exclusive means of nucleocytoplasmic transport. NPCs allow the passive diffusion of ions and small molecules and the active, nuclear transport receptor-mediated bidirectional transport of macromolecules such as proteins, RNAs, ribonucleoparticles (RNPs), and ribosomal subunits across the nuclear envelope. The 55-60 MDa NPC is composed of at least 28 different subunits: AMO1, ELYS, GLE1, GLE2, MLP1, NDC1, NIC96, NSP1, NUP133, NUP145, NUP152, NUP159, NUP170, NUP188, NUP192, NUP37, NUP49, NUP53, NUP56, NUP57, NUP82, NUP84, NUP85, POM152, POM33, POM34, SEC13 and SEH1. Due to its 8-fold rotational symmetry, all subunits are present with 8 copies or multiples thereof.

It is found in the nucleus. Its subcellular location is the nuclear pore complex. This is Nucleoporin NUP37 (NUP37) from Chaetomium thermophilum (strain DSM 1495 / CBS 144.50 / IMI 039719) (Thermochaetoides thermophila).